Here is a 447-residue protein sequence, read N- to C-terminus: Probable cytosol aminopeptidase (447 aa).

Mn(2+) is bound by residues Lys218 and Asp223. Lys230 is an active-site residue. Residues Asp241, Asp300, and Glu302 each coordinate Mn(2+). The active site involves Arg304.

It belongs to the peptidase M17 family. The cofactor is Mn(2+).

Its subcellular location is the cytoplasm. It catalyses the reaction Release of an N-terminal amino acid, Xaa-|-Yaa-, in which Xaa is preferably Leu, but may be other amino acids including Pro although not Arg or Lys, and Yaa may be Pro. Amino acid amides and methyl esters are also readily hydrolyzed, but rates on arylamides are exceedingly low.. The enzyme catalyses Release of an N-terminal amino acid, preferentially leucine, but not glutamic or aspartic acids.. Presumably involved in the processing and regular turnover of intracellular proteins. Catalyzes the removal of unsubstituted N-terminal amino acids from various peptides. The polypeptide is Probable cytosol aminopeptidase (pepA) (Mycoplasma genitalium (strain ATCC 33530 / DSM 19775 / NCTC 10195 / G37) (Mycoplasmoides genitalium)).